The following is a 1014-amino-acid chain: Endogenous retrovirus group K member 10 Pol protein (1014 aa).

In terms of domain architecture, Reverse transcriptase spans 57-245; the sequence is LEKGHIEPSF…TPFHYLGMQI (189 aa). An LPQG motif is present at residues 161 to 164; it reads LPQG. Residues 195–198 carry the YXDD motif; it reads YIDD. In terms of domain architecture, RNase H type-1 spans 460 to 590; the sequence is LENALTVFTD…ADLLVSSALI (131 aa). Positions 469, 497, 517, and 582 each coordinate Mg(2+). The segment at 587 to 628 adopts an Integrase-type zinc-finger fold; the sequence is SALIKAQELHALTHVNAAGLKNKFDVTWKQAKDIVQHCTQCQ. Zn(2+)-binding residues include histidine 596, histidine 600, cysteine 624, and cysteine 627. The 162-residue stretch at 642 to 803 folds into the Integrase catalytic domain; sequence RGLCPNALWQ…TSAEQHLTGK (162 aa). The integrase-type DNA-binding region spans 811-859; sequence KLIWWKDNKNKTWEIGKVITWGRGFACVSPGENQLPVWLPTRHLKFYNE.

It belongs to the beta type-B retroviral polymerase family. HERV class-II K(HML-2) pol subfamily.

It catalyses the reaction DNA(n) + a 2'-deoxyribonucleoside 5'-triphosphate = DNA(n+1) + diphosphate. It carries out the reaction Endonucleolytic cleavage to 5'-phosphomonoester.. Early post-infection, the reverse transcriptase converts the viral RNA genome into double-stranded viral DNA. The RNase H domain of the reverse transcriptase performs two functions. It degrades the RNA template and specifically removes the RNA primer from the RNA/DNA hybrid. Following nuclear import, the integrase catalyzes the insertion of the linear, double-stranded viral DNA into the host cell chromosome. Endogenous Pol proteins may have kept, lost or modified their original function during evolution. This Homo sapiens (Human) protein is Endogenous retrovirus group K member 10 Pol protein (ERVK-10).